A 205-amino-acid chain; its full sequence is tRNA (guanine-N(7)-)-methyltransferase (205 aa).

S-adenosyl-L-methionine contacts are provided by glutamate 36, glutamate 61, aspartate 88, and aspartate 109. Aspartate 109 is a catalytic residue. Substrate is bound at residue lysine 113. The interval 115–120 is interaction with RNA; it reads RHEKRR. Substrate is bound by residues aspartate 145 and 183-186; that span reads TGYE.

The protein belongs to the class I-like SAM-binding methyltransferase superfamily. TrmB family.

The catalysed reaction is guanosine(46) in tRNA + S-adenosyl-L-methionine = N(7)-methylguanosine(46) in tRNA + S-adenosyl-L-homocysteine. It participates in tRNA modification; N(7)-methylguanine-tRNA biosynthesis. In terms of biological role, catalyzes the formation of N(7)-methylguanine at position 46 (m7G46) in tRNA. In Mycoplasmopsis agalactiae (strain NCTC 10123 / CIP 59.7 / PG2) (Mycoplasma agalactiae), this protein is tRNA (guanine-N(7)-)-methyltransferase.